The following is a 604-amino-acid chain: MKLLGLLSGLVVVATALPQADFDLQSSLLTDPTKVAGTTFDYIIAGGGLTGLTVAARLTENPNITVLVIERGFYESNIGPIIENLNHYGDIFGTSVDQAFETIPLAIHNRTEIVRSGKGLGGSTLVNGGSWTRPHKAQVDSWESVFGMEGWNWDSLLPYMKKIEAARAPNAEQIAAGHYYDPSCHGTDGIVHVGPRDTGESFSPMIKSLMKNANNSGIPVQKDLGCGVPHGISMILNDVHEDQTRSDAAREWLLPNYQRSNLKILTGQMVGKVLFDTTTTTPKAVGVNFGTHAKVNFDVHARHEVLLASGSAVSPQILEHSGVGLKAVLDNVGVEQLVDLPVGLNLQDQTTTTVRSNINSIGAGQGQAAYFATFNETFGDQAPRAHQLLNTKLEEWAKDVVSRGGFHNETALLVQYENYRDWLVNEDVSFAEIFIDTAGKLNLDLWDLIPFTRGYVHILDSDPYLRRFAYDPQFFLNELDVLGQAAASKLAREISNTGEMTQYFNGEAIPGNNLAYNATLDDWVDHVKQNFRANYHGVGTCSMMSKELGGVVDAAARVYGVESLRVIDGSIPPTQLSSHVMTVFYGMAQKVSEAILADYNATVN.

The signal sequence occupies residues 1–16 (MKLLGLLSGLVVVATA). Positions 49 and 50 each coordinate FAD. The N-linked (GlcNAc...) asparagine glycan is linked to N63. FAD is bound at residue E70. N109 carries N-linked (GlcNAc...) asparagine glycosylation. Residues S123, N127, G128, and S130 each contribute to the FAD site. Cysteines 184 and 226 form a disulfide. N214 carries N-linked (GlcNAc...) asparagine glycosylation. Residue V270 coordinates FAD. 3 N-linked (GlcNAc...) asparagine glycosylation sites follow: N375, N408, and N517. H536 serves as the catalytic Proton acceptor. Residues R557 and V558 each coordinate O2. Residues G569 and M581 each contribute to the FAD site. The N-linked (GlcNAc...) asparagine glycan is linked to N600.

Belongs to the GMC oxidoreductase family. In terms of assembly, homodimer. The cofactor is FAD.

The protein resides in the secreted. The protein localises to the cell wall. It is found in the cytoplasm. It localises to the extracellular space. Its subcellular location is the extracellular matrix. It catalyses the reaction beta-D-glucose + O2 = D-glucono-1,5-lactone + H2O2. Glucose oxidase catalyzes the oxidation of beta-D-glucose to D-glucono-delta-lactone and hydrogen peroxide in the presence of molecular oxygen. D-glucono-delta-lactone is sequentially hydrolyzed by lactonase to D-gluconic acid, and the resulting hydrogen peroxide is hydrolyzed by catalase to oxygen and water. Acts as a key factor contributing to fungal disease of apple. The production of gluconic acid leads to host tissue acidification that enhances the expression of pectolytic enzymes and the establishment of conditions for necrotrophic development of P.expansum. In Penicillium expansum (Blue mold rot fungus), this protein is Glucose oxidase 2.